The chain runs to 427 residues: Galactose-3-O-sulfotransferase 3 (427 aa).

Topologically, residues 1 to 19 (MPPIFQRLQQATKMSRRKI) are cytoplasmic. The helical; Signal-anchor for type II membrane protein transmembrane segment at 20–40 (LLLVLGCSTLSLLIHQGAQLS) threads the bilayer. Over 41 to 427 (WYPKLFPLSC…RPIRALRPGH (387 aa)) the chain is Lumenal. N-linked (GlcNAc...) asparagine glycosylation is found at asparagine 90, asparagine 109, asparagine 176, and asparagine 301. Residues 404–427 (MRLRPEPVLDNPPPRPIRALRPGH) are disordered.

It belongs to the galactose-3-O-sulfotransferase family. Mg(2+) serves as cofactor.

It is found in the golgi apparatus. The protein localises to the golgi stack membrane. Its pathway is protein modification; carbohydrate sulfation. Functionally, transfers a sulfate to position 3 of non-reducing beta-galactosyl residues in N-glycans and core2-branched O-glycans. Has high activity towards Gal-beta-1,4-GlcNAc, Gal-beta-1,4(Fuc-alpha-1,3)GlcNAc and lower activity towards Gal-beta-1,3(Fuc-alpha-1,4)GlcNAc. The polypeptide is Galactose-3-O-sulfotransferase 3 (GAL3ST3) (Bos taurus (Bovine)).